A 79-amino-acid polypeptide reads, in one-letter code: U-actitoxin-Avd8a (79 aa).

A signal peptide spans 1–19 (MKSLVIVFVVLLGVAMISA). The propeptide occupies 20-36 (NEEELLAILQDQRNDAR).

It belongs to the sea anemone 8 toxin family.

The protein localises to the secreted. It is found in the nematocyst. This is U-actitoxin-Avd8a from Anemonia viridis (Snakelocks anemone).